The chain runs to 70 residues: DNA-directed RNA polymerase subunit omega (70 aa).

Belongs to the RNA polymerase subunit omega family. As to quaternary structure, the RNAP catalytic core consists of 2 alpha, 1 beta, 1 beta' and 1 omega subunit. When a sigma factor is associated with the core the holoenzyme is formed, which can initiate transcription.

The enzyme catalyses RNA(n) + a ribonucleoside 5'-triphosphate = RNA(n+1) + diphosphate. In terms of biological role, promotes RNA polymerase assembly. Latches the N- and C-terminal regions of the beta' subunit thereby facilitating its interaction with the beta and alpha subunits. This chain is DNA-directed RNA polymerase subunit omega, found in Pelobacter propionicus (strain DSM 2379 / NBRC 103807 / OttBd1).